Here is a 571-residue protein sequence, read N- to C-terminus: Podocalyxin (571 aa).

An N-terminal signal peptide occupies residues 1–22; the sequence is MRPAPPPPLLLLLLLLPPPSLS. The Extracellular portion of the chain corresponds to 23 to 474; it reads HDGTIIAATS…EETEDRFSMP (452 aa). The tract at residues 94-361 is disordered; sequence NTVIAPDQDE…QGDDRIKCES (268 aa). Positions 106 to 116 are enriched in polar residues; the sequence is STNPTIATSDS. Asparagine 123 carries N-linked (GlcNAc...) asparagine glycosylation. 4 stretches are compositionally biased toward polar residues: residues 126–144, 151–169, 176–203, and 218–245; these read ILPSATNSMKPDTPVTQTA, NPGTTVSHMTSENTEQTTS, KPSSITPALTSIITPTSPRQPSANSTTL, and TASSSLGTKVVPSSSLYGTSPTRTSSVT. N-linked (GlcNAc...) asparagine glycosylation is present at asparagine 199. Positions 282 to 300 are enriched in low complexity; the sequence is TTSLPSETESLESPSSESP. A compositionally biased stretch (pro residues) spans 301–311; sequence SQPPKLRPTGP. Residues 312 to 322 are compositionally biased toward low complexity; that stretch reads PSSGSSGPAAS. N-linked (GlcNAc...) asparagine glycosylation is found at asparagine 373 and asparagine 383. A helical membrane pass occupies residues 475–495; that stretch reads LIITIVCMASFLLLVAALYGC. Residues 496 to 571 are Cytoplasmic-facing; it reads CHQRLSQRKD…DLDEEEDTHL (76 aa). Threonine 531 is modified (phosphothreonine). Serine 550 is modified (phosphoserine). Threonine 569 is subject to Phosphothreonine.

This sequence belongs to the podocalyxin family. In terms of assembly, found in a complex with EZR, PODXL and NHERF2. Associates with the actin cytoskeleton through complex formation with EZR and NHERF2. Interacts (via the C-terminal PDZ-binding motif DTHL) with NHERF1 (via the PDZ domains); interaction is not detected in glomerular epithelium cells. Interacts (via the C-terminal PDZ-binding motif DTHL) with NHERF2 (via the PDZ 1 domain); interaction is detected in glomerular epithelium cells. Interacts with EZR. Monomer; when associated with the membrane raft. Oligomer; when integrated in the apical membrane. Interacts with NHERF2. Interacts (via the C-terminal PDZ-binding motif DTHL) with NHERF1 (via the PDZ domains); the interaction take place early in the secretory pathway and is necessary for its apical membrane sorting. In terms of processing, N- and O-linked glycosylated. Sialoglycoprotein. Expressed in glomerular and tubular epithelial cells and peritubular capillaries of the kidney (at protein level). Expressed in heart, lung, renal cortex and medulla, kidney and muscle.

It is found in the apical cell membrane. It localises to the membrane raft. The protein resides in the cell projection. Its subcellular location is the lamellipodium. The protein localises to the filopodium. It is found in the ruffle. It localises to the microvillus. The protein resides in the membrane. In terms of biological role, involved in the regulation of both adhesion and cell morphology and cancer progression. Functions as an anti-adhesive molecule that maintains an open filtration pathway between neighboring foot processes in the podocyte by charge repulsion. Acts as a pro-adhesive molecule, enhancing the adherence of cells to immobilized ligands, increasing the rate of migration and cell-cell contacts in an integrin-dependent manner. Induces the formation of apical actin-dependent microvilli. Involved in the formation of a preapical plasma membrane subdomain to set up initial epithelial polarization and the apical lumen formation during renal tubulogenesis. Plays a role in cancer development and aggressiveness by inducing cell migration and invasion through its interaction with the actin-binding protein EZR. Affects EZR-dependent signaling events, leading to increased activities of the MAPK and PI3K pathways in cancer cells. This Canis lupus familiaris (Dog) protein is Podocalyxin (PODXL).